A 65-amino-acid polypeptide reads, in one-letter code: Large ribosomal subunit protein bL35 (65 aa).

The protein belongs to the bacterial ribosomal protein bL35 family.

In Aliarcobacter butzleri (strain RM4018) (Arcobacter butzleri), this protein is Large ribosomal subunit protein bL35.